A 439-amino-acid chain; its full sequence is SH3 domain-containing protein 1 (439 aa).

Residues 32–263 (DAVVVDEEEL…MIAEEEAIGS (232 aa)) enclose the BAR domain. The segment covering 277–291 (SLPQQEPNSNSSGEI) has biased composition (polar residues). The tract at residues 277 to 362 (SLPQQEPNSN…SDDHHNHQLL (86 aa)) is disordered. Positions 318 to 358 (SPKDEMKSSPQEETKSNHQKEIKSSPQEEIKKSNGSDDHHN) are enriched in basic and acidic residues. The region spanning 366–425 (DSYFLAKVVHPFDAQAPGELSLAVDDYVIVRQVAGTGWSEGEYKGKAGWFPSAYVEKQEK) is the SH3 domain.

In terms of assembly, interacts with the auxilin-like protein AUXI1. As to expression, highly expressed in flowers. Detected in seedlings, roots, leaves and stems.

It is found in the cytoplasmic vesicle. The protein localises to the clathrin-coated vesicle. It localises to the cell membrane. The protein resides in the golgi apparatus. Its subcellular location is the trans-Golgi network. It is found in the endoplasmic reticulum. Its function is as follows. Lipid binding protein bound strongly to phosphatidic acid, phosphatidylinositol-4-phosphate and phosphatidylinositol-4,5-bisphosphate. Binds actin in vitro. Involved in trafficking and modification of clathrin-coated vesicles. This Arabidopsis thaliana (Mouse-ear cress) protein is SH3 domain-containing protein 1 (SH3P1).